The primary structure comprises 276 residues: Cytoplasmic envelopment protein 1 (276 aa).

It belongs to the herpesviridae cytoplasmic envelopment protein 1 family.

The protein localises to the virion. The protein resides in the virion tegument. It is found in the host cytoplasm. Its subcellular location is the host Golgi apparatus. Plays a critical role in cytoplasmic virus egress. Participates in the final step of tegumentation and envelope acquisition within the host cytoplasm. The polypeptide is Cytoplasmic envelopment protein 1 (42) (Equus caballus (Horse)).